Consider the following 546-residue polypeptide: Chaperonin GroEL (546 aa).

ATP-binding positions include 29 to 32 (TLGP), K50, 86 to 90 (DGTTT), G415, and D495. The tract at residues 526–546 (EDNAGGGGMPQGMGGGMPGMM) is disordered. Residues 529 to 546 (AGGGGMPQGMGGGMPGMM) show a composition bias toward gly residues.

Belongs to the chaperonin (HSP60) family. As to quaternary structure, forms a cylinder of 14 subunits composed of two heptameric rings stacked back-to-back. Interacts with the co-chaperonin GroES.

Its subcellular location is the cytoplasm. The enzyme catalyses ATP + H2O + a folded polypeptide = ADP + phosphate + an unfolded polypeptide.. Functionally, together with its co-chaperonin GroES, plays an essential role in assisting protein folding. The GroEL-GroES system forms a nano-cage that allows encapsulation of the non-native substrate proteins and provides a physical environment optimized to promote and accelerate protein folding. This Christiangramia forsetii (strain DSM 17595 / CGMCC 1.15422 / KT0803) (Gramella forsetii) protein is Chaperonin GroEL.